Here is a 240-residue protein sequence, read N- to C-terminus: Ribonuclease HII (240 aa).

Positions 21-210 (GLVAGVDEAG…VAAAVQRTVV (190 aa)) constitute an RNase H type-2 domain. Residues Asp-27, Glu-28, and Asp-119 each contribute to the a divalent metal cation site.

This sequence belongs to the RNase HII family. Requires Mn(2+) as cofactor. Mg(2+) is required as a cofactor.

The protein resides in the cytoplasm. It carries out the reaction Endonucleolytic cleavage to 5'-phosphomonoester.. In terms of biological role, endonuclease that specifically degrades the RNA of RNA-DNA hybrids. The sequence is that of Ribonuclease HII from Paracidovorax citrulli (strain AAC00-1) (Acidovorax citrulli).